Consider the following 220-residue polypeptide: Probable septum site-determining protein MinC (220 aa).

Belongs to the MinC family. In terms of assembly, interacts with MinD and FtsZ.

In terms of biological role, cell division inhibitor that blocks the formation of polar Z ring septums. Rapidly oscillates between the poles of the cell to destabilize FtsZ filaments that have formed before they mature into polar Z rings. Prevents FtsZ polymerization. The sequence is that of Probable septum site-determining protein MinC from Vibrio atlanticus (strain LGP32) (Vibrio splendidus (strain Mel32)).